The primary structure comprises 501 residues: GDP-fucose protein O-fucosyltransferase 4 (501 aa).

Topologically, residues 1–10 (MLLQMAGRGK) are cytoplasmic. A helical; Signal-anchor for type II membrane protein membrane pass occupies residues 11–31 (MVPCVCLGLLGVLCWVWVSFA). The Lumenal portion of the chain corresponds to 32-501 (SFPDEQLSLG…MAVRRARGKN (470 aa)). A glycan (N-linked (GlcNAc...) asparagine) is linked at N173. Residues C396 and C399 are joined by a disulfide bond. Residues N428 and N478 are each glycosylated (N-linked (GlcNAc...) asparagine).

It belongs to the glycosyltransferase 10 family.

The protein localises to the endoplasmic reticulum membrane. The enzyme catalyses L-threonyl-[protein] + GDP-beta-L-fucose = 3-O-(alpha-L-fucosyl)-L-threonyl-[protein] + GDP + H(+). It catalyses the reaction L-seryl-[protein] + GDP-beta-L-fucose = 3-O-(alpha-L-fucosyl)-L-seryl-[protein] + GDP + H(+). The protein operates within protein modification; protein glycosylation. Its function is as follows. Protein O-fucosyltransferase that specifically catalyzes O-fucosylation of serine or threonine residues in EMI domains of target proteins. Attaches fucose through an O-glycosidic linkage. O-fucosylation of EMI domain-containing proteins may be required for facilitating protein folding and secretion. The polypeptide is GDP-fucose protein O-fucosyltransferase 4 (fut11) (Takifugu rubripes (Japanese pufferfish)).